A 231-amino-acid chain; its full sequence is Ribosomal RNA small subunit methyltransferase G (231 aa).

S-adenosyl-L-methionine is bound by residues Gly75, 125–126, and Arg140; that span reads GE. Residues 204–213 are compositionally biased toward acidic residues; the sequence is AEAEEGDSPE. Positions 204–231 are disordered; it reads AEAEEGDSPEAADASRGVILELTKKNKG.

It belongs to the methyltransferase superfamily. RNA methyltransferase RsmG family.

Its subcellular location is the cytoplasm. Its function is as follows. Specifically methylates the N7 position of a guanine in 16S rRNA. This Rhodopirellula baltica (strain DSM 10527 / NCIMB 13988 / SH1) protein is Ribosomal RNA small subunit methyltransferase G.